Reading from the N-terminus, the 452-residue chain is MTHIKFDSSALKQFVHENELGEMQAMVNAANDELRNGTGAGADFRDWLHLPTEYDKEEFARIKKAADKIQRDSDVLVVIGIGGSYLGAQMAIDFLHNTFYQAQNAKDRKAPLVVFAGNSLSSTYVHDLIQLIGDKDFSINVVSKSGTTTEPSIAFRIFKGLLIKKYGENEANKRIYATTDKTKGALKTEADAHGYETFVIPDGVGGRYSVLSAVGLLPIAASGADIDKLMEGAAQAEKDYVDPDLTKNEAYQYAAYRNILYRKGYETELLENYEPNMRMFAEWWKQLAGESEGKDQKGIYPSSANFTTDLHSLGQYIQEGRRFLMETVVKLDKPNYDMEIPTEPDNLDGLGYLEGKTMDYVNTKAYEAVVAAHTDGGVPVMTVHIPQEDEYTLGYLIYFFEVAMGISGYLNGINPFNQPGVEAYKTNMFGLLGKPGYEEIGKELRAKMDKND.

Residue E290 is the Proton donor of the active site. Active-site residues include H311 and K425.

It belongs to the GPI family.

It localises to the cytoplasm. It catalyses the reaction alpha-D-glucose 6-phosphate = beta-D-fructose 6-phosphate. It functions in the pathway carbohydrate biosynthesis; gluconeogenesis. It participates in carbohydrate degradation; glycolysis; D-glyceraldehyde 3-phosphate and glycerone phosphate from D-glucose: step 2/4. Its function is as follows. Catalyzes the reversible isomerization of glucose-6-phosphate to fructose-6-phosphate. The sequence is that of Glucose-6-phosphate isomerase from Limosilactobacillus reuteri (strain DSM 20016) (Lactobacillus reuteri).